The following is a 219-amino-acid chain: MEWAYYGSGYSSSGTPSPVGGDGDEDSYMTVSSAPPKRRAGRTKFKETRHPVYKGVRSRNPGRWVCEVREPHGKQRIWLGTFETAEMAARAHDVAAMALRGRAACLNFADSPRRLRVPPLGAGHEEIRRAAVEAAELFRPAPGQHNAAAEAAAAVAAQATAASAELFADFPCYPMDGLEFEMQGYLDMAQGMLIEPPPLAGQSTWAEEDYDCEVNLWSY.

Positions 1 to 19 (MEWAYYGSGYSSSGTPSPV) are enriched in low complexity. The segment at 1–44 (MEWAYYGSGYSSSGTPSPVGGDGDEDSYMTVSSAPPKRRAGRTK) is disordered. The segment at residues 52 to 109 (VYKGVRSRNPGRWVCEVREPHGKQRIWLGTFETAEMAARAHDVAAMALRGRAACLNFA) is a DNA-binding region (AP2/ERF).

The protein belongs to the AP2/ERF transcription factor family. ERF subfamily.

It is found in the nucleus. Transcriptional activator that binds specifically to the DNA sequence 5'-[AG]CCGAC-3'. Binding to the C-repeat/DRE element mediates high salinity- and dehydration-inducible transcription. The polypeptide is Dehydration-responsive element-binding protein 1E (DREB1E) (Oryza sativa subsp. indica (Rice)).